Here is a 53-residue protein sequence, read N- to C-terminus: Large ribosomal subunit protein bL32c (53 aa).

This sequence belongs to the bacterial ribosomal protein bL32 family.

It is found in the plastid. The protein resides in the chloroplast. The sequence is that of Large ribosomal subunit protein bL32c (rpl32) from Guillardia theta (Cryptophyte).